Reading from the N-terminus, the 372-residue chain is Homeobox protein Nkx-2.1 (372 aa).

Positions Arg-161 to Ala-220 form a DNA-binding region, homeobox. Disordered stretches follow at residues Gln-219 to Arg-258, Lys-269 to Gln-288, and Ala-312 to Gly-340. The span at Ser-233–Gly-244 shows a compositional bias: gly residues. The span at Cys-245–Gln-254 shows a compositional bias: low complexity. The residue at position 255 (Ser-255) is a Phosphoserine. A compositionally biased stretch (low complexity) spans Ala-273 to Gln-288.

It belongs to the NK-2 homeobox family. In terms of assembly, interacts with WWTR1. In terms of processing, phosphorylated on serine residues by STK3/MST2. Thyroid, lung and brain.

The protein localises to the nucleus. Functionally, transcription factor that binds and activates the promoter of thyroid specific genes such as thyroglobulin, thyroperoxidase, and thyrotropin receptor. Crucial in the maintenance of the thyroid differentiation phenotype. May play a role in lung development and surfactant homeostasis. Forms a regulatory loop with GRHL2 that coordinates lung epithelial cell morphogenesis and differentiation. Activates the transcription of GNRHR and plays a role in enhancing the circadian oscillation of its gene expression. Represses the transcription of the circadian transcriptional repressor NR1D1. This is Homeobox protein Nkx-2.1 from Mus musculus (Mouse).